We begin with the raw amino-acid sequence, 467 residues long: Retinoic acid receptor RXR-alpha (467 aa).

The disordered stretch occupies residues 1–61 (MDTKHFLPLD…LHSPISTLSS (61 aa)). A modulating region spans residues 1-139 (MDTKHFLPLD…GNMSSFTKHI (139 aa)). A Glycyl lysine isopeptide (Lys-Gly) (interchain with G-Cter in SUMO2) cross-link involves residue lysine 4. Residues serine 22 and serine 28 each carry the phosphoserine modification. Low complexity predominate over residues 32–55 (PSLHPSLGPGLGSPLGSPGQLHSP). Residues serine 61 and serine 75 each carry the phosphoserine; by MAPK8 and MAPK9 modification. The interval 79-109 (PHSMSVPTTPTLGFETGSPQLNSPMNPVSSS) is disordered. The span at 83–109 (SVPTTPTLGFETGSPQLNSPMNPVSSS) shows a compositional bias: polar residues. Threonine 87 is modified (phosphothreonine; by MAPK8 and MAPK9). Lysine 113 is covalently cross-linked (Glycyl lysine isopeptide (Lys-Gly) (interchain with G-Cter in SUMO)). Serine 134 is modified (phosphoserine). The Zn(2+) site is built by cysteine 140 and cysteine 143. Residues 140–160 (CAICGDRSSGKHYGVYSCEGC) form an NR C4-type zinc finger. The segment at residues 140 to 205 (CAICGDRSSG…RYQKCLAMGM (66 aa)) is a DNA-binding region (nuclear receptor). Lysine 150 bears the N6-acetyllysine mark. 2 residues coordinate Zn(2+): cysteine 157 and cysteine 160. The segment at 165–170 (KRTVRK) is nuclear localization signal. Zn(2+) contacts are provided by cysteine 176, cysteine 182, cysteine 192, and cysteine 195. The NR C4-type zinc finger occupies 176–200 (CRDNKDCLIDKRQRNRCQYCRYQKC). Residues 206–229 (KREAVQEERQRGKDRNENEVESTS) form a hinge region. Basic and acidic residues predominate over residues 211 to 223 (QEERQRGKDRNEN). The interval 211–233 (QEERQRGKDRNENEVESTSSANE) is disordered. An NR LBD domain is found at 232-463 (NEDMPVEKIL…TFLMEMLEAP (232 aa)). Serine 264 carries the phosphoserine modification. Serine 265 carries the post-translational modification Phosphoserine; by MAPK8 and MAPK9. Positions 321 and 332 each coordinate 9-cis-retinoate. Arginine 321 and alanine 332 together coordinate all-trans-retinoate. A required for nuclear export region spans residues 353–373 (RVLTELVSKMRDMQMDKTELG).

This sequence belongs to the nuclear hormone receptor family. NR2 subfamily. In terms of assembly, homodimer. Heterodimer (via C-terminus) with RARA; required for ligand-dependent retinoic acid receptor transcriptional activity; association with RARA is enhanced by pulsatile shear stress. Heterodimer with PPARA (via the leucine-like zipper in the LBD); the interaction is required for PPARA transcriptional activity. Heterodimerizes with PPARG. Heterodimerizes (via NR LBD) with RARB. Heterodimerizes with NR1H4; the heterodimerization enhances the binding affinity for LXXLL motifs from coactivators. Interacts with NCOA3 and NCOA6 coactivators. Interacts with FAM120B. Interacts with coactivator PELP1, SENP6, SFPQ, DNTTIP2 and RNF8. Interacts with PRMT2. Interacts with ASXL1. Interacts with BHLHE40/DEC1, BHLHE41/DEC2, MED1, NCOR1 and NCOR2. Interacts in a ligand-dependent fashion with MED1 and NCOA1. Interacts with VDR. Interacts with EP300; the interaction is decreased by 9-cis retinoic acid. Heterodimer (via C-terminus) with NR4A1 (DNA-binding domain); the interaction is enhanced by 9-cis retinoic acid. NR4A1 competes with EP300 for interaction with RXRA and thereby attenuates EP300 mediated acetylation of RXRA. In the absence of hormonal ligand, interacts with TACC1. Interacts ith IGFBP3. In terms of processing, phosphorylated on serine and threonine residues mainly in the N-terminal modulating domain. Constitutively phosphorylated on Ser-22 in the presence or absence of ligand. Under stress conditions, hyperphosphorylated by activated JNK on Ser-61, Ser-75, Thr-87 and Ser-265. Phosphorylated on Ser-28, in vitro, by PKA. This phosphorylation is required for repression of cAMP-mediated transcriptional activity of RARA. Ubiquitinated by UBR5, leading to its degradation: UBR5 specifically recognizes and binds ligand-bound RXRA when it is not associated with coactivators (NCOAs). In presence of NCOAs, the UBR5-degron is not accessible, preventing its ubiquitination and degradation. Post-translationally, sumoylation negatively regulates transcriptional activity. Desumoylated specifically by SENP6. In terms of processing, acetylated by EP300; acetylation enhances DNA binding and transcriptional activity. As to expression, expressed in the adrenal gland with main expression in the zona fasciculata and medulla (at protein level). Expressed in aortic endothelial cells, with high expression in the descending thoracic aorta and the outer curvature of the aortic arch, where pulsatory shear stress exists, but very low in the inner curvature of the aortic arch, where oscillatory shear stress prevails (at protein level).

The protein resides in the nucleus. The protein localises to the cytoplasm. It is found in the mitochondrion. Its function is as follows. Receptor for retinoic acid that acts as a transcription factor. Forms homo- or heterodimers with retinoic acid receptors (RARs) and binds to target response elements in response to their ligands, all-trans or 9-cis retinoic acid, to regulate gene expression in various biological processes. The RAR/RXR heterodimers bind to the retinoic acid response elements (RARE) composed of tandem 5'-AGGTCA-3' sites known as DR1-DR5 to regulate transcription. The high affinity ligand for retinoid X receptors (RXRs) is 9-cis retinoic acid. In the absence of ligand, the RXR-RAR heterodimers associate with a multiprotein complex containing transcription corepressors that induce histone deacetylation, chromatin condensation and transcriptional suppression. On ligand binding, the corepressors dissociate from the receptors and coactivators are recruited leading to transcriptional activation. Serves as a common heterodimeric partner for a number of nuclear receptors, such as RARA, RARB and PPARA. The RXRA/RARB heterodimer can act as a transcriptional repressor or transcriptional activator, depending on the RARE DNA element context. The RXRA/PPARA heterodimer is required for PPARA transcriptional activity on fatty acid oxidation genes such as ACOX1 and the P450 system genes. Together with RARA, positively regulates microRNA-10a expression, thereby inhibiting the GATA6/VCAM1 signaling response to pulsatile shear stress in vascular endothelial cells. Acts as an enhancer of RARA binding to RARE DNA element. May facilitate the nuclear import of heterodimerization partners such as VDR and NR4A1. Promotes myelin debris phagocytosis and remyelination by macrophages. Plays a role in the attenuation of the innate immune system in response to viral infections, possibly by negatively regulating the transcription of antiviral genes such as type I IFN genes. Involved in the regulation of calcium signaling by repressing ITPR2 gene expression, thereby controlling cellular senescence. This Rattus norvegicus (Rat) protein is Retinoic acid receptor RXR-alpha (Rxra).